A 256-amino-acid polypeptide reads, in one-letter code: Leucyl/phenylalanyl-tRNA--protein transferase (256 aa).

A disordered region spans residues 232 to 256 (DGCTGASRHGPGADMRRGDMSREST). Basic and acidic residues predominate over residues 245–256 (DMRRGDMSREST).

The protein belongs to the L/F-transferase family.

It is found in the cytoplasm. It carries out the reaction N-terminal L-lysyl-[protein] + L-leucyl-tRNA(Leu) = N-terminal L-leucyl-L-lysyl-[protein] + tRNA(Leu) + H(+). The enzyme catalyses N-terminal L-arginyl-[protein] + L-leucyl-tRNA(Leu) = N-terminal L-leucyl-L-arginyl-[protein] + tRNA(Leu) + H(+). It catalyses the reaction L-phenylalanyl-tRNA(Phe) + an N-terminal L-alpha-aminoacyl-[protein] = an N-terminal L-phenylalanyl-L-alpha-aminoacyl-[protein] + tRNA(Phe). Functionally, functions in the N-end rule pathway of protein degradation where it conjugates Leu, Phe and, less efficiently, Met from aminoacyl-tRNAs to the N-termini of proteins containing an N-terminal arginine or lysine. This Chromohalobacter salexigens (strain ATCC BAA-138 / DSM 3043 / CIP 106854 / NCIMB 13768 / 1H11) protein is Leucyl/phenylalanyl-tRNA--protein transferase.